Reading from the N-terminus, the 285-residue chain is Extracellular metalloprotease NCU07200 (285 aa).

Positions 1–18 (MQIKSFLLAAAAAPAALG) are cleaved as a signal peptide. His-197 provides a ligand contact to Zn(2+). The active site involves Glu-198. His-201 is a binding site for Zn(2+). A disulfide bridge links Cys-233 with Cys-260. The N-linked (GlcNAc...) asparagine glycan is linked to Asn-282.

Belongs to the peptidase M43B family.

It localises to the secreted. Secreted metalloproteinase that allows assimilation of proteinaceous substrates. In Neurospora crassa (strain ATCC 24698 / 74-OR23-1A / CBS 708.71 / DSM 1257 / FGSC 987), this protein is Extracellular metalloprotease NCU07200.